A 529-amino-acid chain; its full sequence is Delayed-rectifier potassium channel regulatory subunit KCNS1 (529 aa).

Residues 1–217 are Cytoplasmic-facing; it reads MLMLLVRGTH…LTMENPGYSL (217 aa). Residues 218–239 traverse the membrane as a helical segment; sequence PSKLFSCVSISVVLASIAAMCI. Topologically, residues 240 to 270 are extracellular; it reads HSLPEYQAREAAAAVAAVAAGRSPEGVRDDP. Residues 271–293 form a helical membrane-spanning segment; it reads VLRRLEYFCIAWFSFEVSSRLLL. Topologically, residues 294 to 304 are cytoplasmic; the sequence is APSTRNFFCHP. Residues 305–322 form a helical membrane-spanning segment; the sequence is LNLIDIVSVLPFYLTLLA. Residues 323-340 are Extracellular-facing; sequence GVALGDQGGTGGKELGHL. Residues 341 to 361 traverse the membrane as a helical; Voltage-sensor segment; sequence GKVVQVFRLMRIFRVLKLARH. Residues 362-376 lie on the Cytoplasmic side of the membrane; that stretch reads STGLRSLGATLKHSY. The chain crosses the membrane as a helical span at residues 377 to 398; that stretch reads REVGILLLYLAVGVSVFSGVAY. At 399–411 the chain is on the extracellular side; that stretch reads TAEKEEDVGFNTI. Residues 412-423 constitute an intramembrane region (helical); the sequence is PACWWWGTVSMT. Residues 424 to 429 carry the Selectivity filter motif; the sequence is TVGYGD. An intramembrane segment occupies 424-431; sequence TVGYGDVV. Topologically, residues 432–438 are extracellular; that stretch reads PVTVAGK. Residues 439 to 467 traverse the membrane as a helical segment; sequence LAASGCILGGILVVALPITIIFNKFSHFY. Topologically, residues 468–529 are cytoplasmic; it reads RRQKALEAAV…PSEPPHPQMY (62 aa). The interval 494-529 is disordered; it reads GVSEASLETSRETSQEGRSADLETQAPSEPPHPQMY. The span at 502-514 shows a compositional bias: basic and acidic residues; sequence TSRETSQEGRSAD.

Belongs to the potassium channel family. S (TC 1.A.1.2) subfamily. Kv9.1/KCNS1 sub-subfamily. In terms of assembly, heterotetramer with KCNB1. Heterotetramer with KCNB2. Does not form homomultimers.

The protein resides in the cell membrane. Potassium channel regulatory subunit that modulate the delayed rectifier voltage-gated potassium channel activity of KCNB1 and KCNB2 by altering their kinetics, expression levels, and shifting the half-inactivation potential to more polarized values. While it does not form functional channels on its own, it can form functional heterotetrameric channels with KCNB1 and KCNB2. Each regulatory subunit has unique regulatory properties that can lead to extensive inhibition, significant changes in kinetics, and/or substantial shifts in the voltage dependencies of the inactivation process. The chain is Delayed-rectifier potassium channel regulatory subunit KCNS1 from Macaca mulatta (Rhesus macaque).